A 165-amino-acid chain; its full sequence is NADPH-dependent 7-cyano-7-deazaguanine reductase (165 aa).

Cys56 functions as the Thioimide intermediate in the catalytic mechanism. Asp63 acts as the Proton donor in catalysis. Residues 78–80 (VES) and 97–98 (HE) contribute to the substrate site.

This sequence belongs to the GTP cyclohydrolase I family. QueF type 1 subfamily.

It is found in the cytoplasm. The catalysed reaction is 7-aminomethyl-7-carbaguanine + 2 NADP(+) = 7-cyano-7-deazaguanine + 2 NADPH + 3 H(+). The protein operates within tRNA modification; tRNA-queuosine biosynthesis. Catalyzes the NADPH-dependent reduction of 7-cyano-7-deazaguanine (preQ0) to 7-aminomethyl-7-deazaguanine (preQ1). This Bacillus mycoides (strain KBAB4) (Bacillus weihenstephanensis) protein is NADPH-dependent 7-cyano-7-deazaguanine reductase.